Here is a 178-residue protein sequence, read N- to C-terminus: MLEGQIRESISKSQAKALRNDGYLIANIYGKGQQNIHCAFKLNDFIKAMKQKTTLIFPVQVGGKTLEVVIQEYQKDPVTNTLIHVDLLLAQKGILNKYKVPVIVKGNAKGLKNKGVLFISTKRISVKCAAENLPNAYEIDVSDLDVGDSILIRDLPQFDNVNVLNRPSVAVVGVIKAK.

The protein belongs to the bacterial ribosomal protein bL25 family. CTC subfamily. As to quaternary structure, part of the 50S ribosomal subunit; part of the 5S rRNA/L5/L18/L25 subcomplex. Contacts the 5S rRNA. Binds to the 5S rRNA independently of L5 and L18.

In terms of biological role, this is one of the proteins that binds to the 5S RNA in the ribosome where it forms part of the central protuberance. In Helicobacter hepaticus (strain ATCC 51449 / 3B1), this protein is Large ribosomal subunit protein bL25.